The primary structure comprises 79 residues: Small ribosomal subunit protein bS21 (79 aa).

The disordered stretch occupies residues 59 to 79 (RKKMQREGLLPMKPKPVVGVR).

It belongs to the bacterial ribosomal protein bS21 family.

The polypeptide is Small ribosomal subunit protein bS21 (Methylocella silvestris (strain DSM 15510 / CIP 108128 / LMG 27833 / NCIMB 13906 / BL2)).